Consider the following 156-residue polypeptide: Calcium-binding protein A (156 aa).

4 EF-hand domains span residues 4-39, 40-75, 80-115, and 118-153; these read AITK…TGSK, DPLR…VAAK, AINN…NNPD, and APLM…YKSL. Ca(2+) contacts are provided by D17, N19, D21, N23, E28, D53, D55, D57, E64, D93, D95, D97, R99, E104, D131, D133, D135, and E142.

The polypeptide is Calcium-binding protein A (cbpA) (Dictyostelium discoideum (Social amoeba)).